A 211-amino-acid polypeptide reads, in one-letter code: Thiamine-phosphate synthase (211 aa).

Residues 37–41 and Asn69 contribute to the 4-amino-2-methyl-5-(diphosphooxymethyl)pyrimidine site; that span reads QLRIK. Mg(2+) is bound by residues Asp70 and Asp89. Residue Ser108 participates in 4-amino-2-methyl-5-(diphosphooxymethyl)pyrimidine binding. 134–136 serves as a coordination point for 2-[(2R,5Z)-2-carboxy-4-methylthiazol-5(2H)-ylidene]ethyl phosphate; the sequence is TQT. Lys137 is a 4-amino-2-methyl-5-(diphosphooxymethyl)pyrimidine binding site. 2-[(2R,5Z)-2-carboxy-4-methylthiazol-5(2H)-ylidene]ethyl phosphate is bound by residues Gly166 and 186–187; that span reads VS.

It belongs to the thiamine-phosphate synthase family. The cofactor is Mg(2+).

It catalyses the reaction 2-[(2R,5Z)-2-carboxy-4-methylthiazol-5(2H)-ylidene]ethyl phosphate + 4-amino-2-methyl-5-(diphosphooxymethyl)pyrimidine + 2 H(+) = thiamine phosphate + CO2 + diphosphate. It carries out the reaction 2-(2-carboxy-4-methylthiazol-5-yl)ethyl phosphate + 4-amino-2-methyl-5-(diphosphooxymethyl)pyrimidine + 2 H(+) = thiamine phosphate + CO2 + diphosphate. The enzyme catalyses 4-methyl-5-(2-phosphooxyethyl)-thiazole + 4-amino-2-methyl-5-(diphosphooxymethyl)pyrimidine + H(+) = thiamine phosphate + diphosphate. It participates in cofactor biosynthesis; thiamine diphosphate biosynthesis; thiamine phosphate from 4-amino-2-methyl-5-diphosphomethylpyrimidine and 4-methyl-5-(2-phosphoethyl)-thiazole: step 1/1. In terms of biological role, condenses 4-methyl-5-(beta-hydroxyethyl)thiazole monophosphate (THZ-P) and 2-methyl-4-amino-5-hydroxymethyl pyrimidine pyrophosphate (HMP-PP) to form thiamine monophosphate (TMP). The protein is Thiamine-phosphate synthase of Klebsiella pneumoniae subsp. pneumoniae (strain ATCC 700721 / MGH 78578).